Consider the following 480-residue polypeptide: Glycogen synthase (480 aa).

Position 15 (Lys15) interacts with ADP-alpha-D-glucose.

This sequence belongs to the glycosyltransferase 1 family. Bacterial/plant glycogen synthase subfamily.

The catalysed reaction is [(1-&gt;4)-alpha-D-glucosyl](n) + ADP-alpha-D-glucose = [(1-&gt;4)-alpha-D-glucosyl](n+1) + ADP + H(+). Its pathway is glycan biosynthesis; glycogen biosynthesis. In terms of biological role, synthesizes alpha-1,4-glucan chains using ADP-glucose. This is Glycogen synthase from Rhizobium rhizogenes (strain K84 / ATCC BAA-868) (Agrobacterium radiobacter).